The chain runs to 154 residues: 6,7-dimethyl-8-ribityllumazine synthase (154 aa).

5-amino-6-(D-ribitylamino)uracil-binding positions include phenylalanine 22, alanine 56–glutamate 58, and threonine 80–isoleucine 82. Serine 85 to threonine 86 is a (2S)-2-hydroxy-3-oxobutyl phosphate binding site. The active-site Proton donor is histidine 88. Phenylalanine 113 is a 5-amino-6-(D-ribitylamino)uracil binding site. Arginine 127 contributes to the (2S)-2-hydroxy-3-oxobutyl phosphate binding site.

Belongs to the DMRL synthase family.

The catalysed reaction is (2S)-2-hydroxy-3-oxobutyl phosphate + 5-amino-6-(D-ribitylamino)uracil = 6,7-dimethyl-8-(1-D-ribityl)lumazine + phosphate + 2 H2O + H(+). It functions in the pathway cofactor biosynthesis; riboflavin biosynthesis; riboflavin from 2-hydroxy-3-oxobutyl phosphate and 5-amino-6-(D-ribitylamino)uracil: step 1/2. Functionally, catalyzes the formation of 6,7-dimethyl-8-ribityllumazine by condensation of 5-amino-6-(D-ribitylamino)uracil with 3,4-dihydroxy-2-butanone 4-phosphate. This is the penultimate step in the biosynthesis of riboflavin. In Lactococcus lactis subsp. cremoris (strain MG1363), this protein is 6,7-dimethyl-8-ribityllumazine synthase.